Consider the following 92-residue polypeptide: Small ribosomal subunit protein uS19 (92 aa).

This sequence belongs to the universal ribosomal protein uS19 family.

Protein S19 forms a complex with S13 that binds strongly to the 16S ribosomal RNA. The polypeptide is Small ribosomal subunit protein uS19 (Albidiferax ferrireducens (strain ATCC BAA-621 / DSM 15236 / T118) (Rhodoferax ferrireducens)).